The following is a 435-amino-acid chain: 3-phosphoshikimate 1-carboxyvinyltransferase (435 aa).

Residues Lys23, Ser24, and Arg28 each contribute to the 3-phosphoshikimate site. Position 23 (Lys23) interacts with phosphoenolpyruvate. Gly97 and Arg125 together coordinate phosphoenolpyruvate. Ser170, Ser171, Gln172, Ser198, Asp315, Asn338, and Lys342 together coordinate 3-phosphoshikimate. Residue Gln172 coordinates phosphoenolpyruvate. The Proton acceptor role is filled by Asp315. The phosphoenolpyruvate site is built by Arg346, Arg388, and Lys413.

Belongs to the EPSP synthase family. As to quaternary structure, monomer.

The protein localises to the cytoplasm. The catalysed reaction is 3-phosphoshikimate + phosphoenolpyruvate = 5-O-(1-carboxyvinyl)-3-phosphoshikimate + phosphate. Its pathway is metabolic intermediate biosynthesis; chorismate biosynthesis; chorismate from D-erythrose 4-phosphate and phosphoenolpyruvate: step 6/7. Its function is as follows. Catalyzes the transfer of the enolpyruvyl moiety of phosphoenolpyruvate (PEP) to the 5-hydroxyl of shikimate-3-phosphate (S3P) to produce enolpyruvyl shikimate-3-phosphate and inorganic phosphate. The protein is 3-phosphoshikimate 1-carboxyvinyltransferase of Buchnera aphidicola subsp. Cinara cedri (strain Cc).